The following is a 247-amino-acid chain: 1-(5-phosphoribosyl)-5-[(5-phosphoribosylamino)methylideneamino] imidazole-4-carboxamide isomerase (247 aa).

Residue D8 is the Proton acceptor of the active site. D130 acts as the Proton donor in catalysis.

Belongs to the HisA/HisF family.

Its subcellular location is the cytoplasm. The enzyme catalyses 1-(5-phospho-beta-D-ribosyl)-5-[(5-phospho-beta-D-ribosylamino)methylideneamino]imidazole-4-carboxamide = 5-[(5-phospho-1-deoxy-D-ribulos-1-ylimino)methylamino]-1-(5-phospho-beta-D-ribosyl)imidazole-4-carboxamide. It participates in amino-acid biosynthesis; L-histidine biosynthesis; L-histidine from 5-phospho-alpha-D-ribose 1-diphosphate: step 4/9. This Stutzerimonas stutzeri (strain A1501) (Pseudomonas stutzeri) protein is 1-(5-phosphoribosyl)-5-[(5-phosphoribosylamino)methylideneamino] imidazole-4-carboxamide isomerase.